A 1215-amino-acid polypeptide reads, in one-letter code: Chromosome segregation protein sudA (1215 aa).

ATP is bound at residue 32-39 (GRNGSGKS). A coiled-coil region spans residues 177 to 522 (KIMHETNSKR…LSQMMDHNTS (346 aa)). Residues 313-332 (SDNQAAAQESKARHDESLKA) form a disordered region. The 113-residue stretch at 538–650 (EGVYGTLAEL…PNLQVASQYA (113 aa)) folds into the SMC hinge domain. Residues 654–676 (GVNATTPEGDRSDKRGALTGGFH) form a disordered region. A coiled-coil region spans residues 684–1091 (DAVKNLAKWR…EEAKHSVENY (408 aa)).

It belongs to the SMC family. SMC3 subfamily.

Its subcellular location is the nucleus. Functionally, involved in chromosome segregation in mitosis. The protein is Chromosome segregation protein sudA (sudA) of Emericella nidulans (strain FGSC A4 / ATCC 38163 / CBS 112.46 / NRRL 194 / M139) (Aspergillus nidulans).